Reading from the N-terminus, the 155-residue chain is Large ribosomal subunit protein eL24 (155 aa).

A compositionally biased stretch (basic and acidic residues) spans 98-129 (PEVRKAKRDDKAKADKEKKKADKAARKAEKAK). Positions 98 to 155 (PEVRKAKRDDKAKADKEKKKADKAARKAEKAKLAAAQGSKVSKQQAKGAFQKVAATSR) are disordered.

The protein belongs to the eukaryotic ribosomal protein eL24 family.

The chain is Large ribosomal subunit protein eL24 (RPL24) from Candida glabrata (strain ATCC 2001 / BCRC 20586 / JCM 3761 / NBRC 0622 / NRRL Y-65 / CBS 138) (Yeast).